A 557-amino-acid chain; its full sequence is Probable asparagine synthetase [glutamine-hydrolyzing] (557 aa).

Catalysis depends on C2, which acts as the For GATase activity. Positions 2 to 188 (CGILAILNSL…PGHYFSSKTK (187 aa)) constitute a Glutamine amidotransferase type-2 domain. L-glutamine-binding positions include 50 to 54 (RLAIV), 75 to 77 (NGE), and D101. The Asparagine synthetase domain occupies 217-466 (AIKEAFEQAV…LPSSVLWRQK (250 aa)). ATP-binding positions include L239, I279, and 353-354 (SG). The disordered stretch occupies residues 538 to 557 (WGASQDPSGRAQKVHLSTTE).

The enzyme catalyses L-aspartate + L-glutamine + ATP + H2O = L-asparagine + L-glutamate + AMP + diphosphate + H(+). The protein operates within amino-acid biosynthesis; L-asparagine biosynthesis; L-asparagine from L-aspartate (L-Gln route): step 1/1. This is Probable asparagine synthetase [glutamine-hydrolyzing] (asns) from Dictyostelium discoideum (Social amoeba).